Here is a 199-residue protein sequence, read N- to C-terminus: Phosphatidylethanolamine N-methyltransferase (199 aa).

Topologically, residues 2-12 (SWLLGYVDPTE) are lumenal. The segment at residues 13–33 (PSFVAAVLTIVFNPLFWNVVA) is an intramembrane region (helical). The Lumenal segment spans residues 34–45 (RWEQRTRKLSRA). Residues 46–66 (FGSPYLACYSLGSIILLLNIL) form a helical membrane-spanning segment. Residues 67–93 (RSHCFTQAMMSQPKMEGLDSHTIYFLG) lie on the Cytoplasmic side of the membrane. Residues 94–114 (LALLGWGLVFVLSSFYALGFT) traverse the membrane as a helical segment. Residue 98–100 (GWG) participates in S-adenosyl-L-methionine binding. Over 115 to 157 (GTFLGDYFGILKESRVTTFPFSVLDNPMYWGSTANYLGWALMH) the chain is Lumenal. Residues 158–178 (ASPTGLLLTVLVALVYVVALL) form a helical membrane-spanning segment. Topologically, residues 179-199 (FEEPFTAEIYRRKATRLHKRS) are cytoplasmic. 180-181 (EE) contacts S-adenosyl-L-methionine.

It belongs to the class VI-like SAM-binding methyltransferase superfamily. PEMT/PEM2 methyltransferase family. As to expression, expressed in liver (at protein level).

Its subcellular location is the endoplasmic reticulum membrane. It localises to the mitochondrion membrane. The catalysed reaction is a 1,2-diacyl-sn-glycero-3-phosphoethanolamine + S-adenosyl-L-methionine = a 1,2-diacyl-sn-glycero-3-phospho-N-methylethanolamine + S-adenosyl-L-homocysteine + H(+). It catalyses the reaction a 1,2-diacyl-sn-glycero-3-phospho-N-methylethanolamine + S-adenosyl-L-methionine = a 1,2-diacyl-sn-glycero-3-phospho-N,N-dimethylethanolamine + S-adenosyl-L-homocysteine + H(+). The enzyme catalyses a 1,2-diacyl-sn-glycero-3-phospho-N,N-dimethylethanolamine + S-adenosyl-L-methionine = a 1,2-diacyl-sn-glycero-3-phosphocholine + S-adenosyl-L-homocysteine + H(+). It carries out the reaction 1,2-di-(9Z-octadecenoyl)-sn-glycero-3-phosphoethanolamine + S-adenosyl-L-methionine = 1,2-di-(9Z-octadecenoyl)-sn-glycero-3-phospho-N-methylethanolamine + S-adenosyl-L-homocysteine + H(+). The catalysed reaction is 1,2-di-(9Z-octadecenoyl)-sn-glycero-3-phospho-N-methylethanolamine + S-adenosyl-L-methionine = 1,2-di-(9Z-octadecenoyl)-sn-glycero-3-phospho-N,N-dimethylethanolamine + S-adenosyl-L-homocysteine + H(+). It catalyses the reaction 1,2-di-(9Z-octadecenoyl)-sn-glycero-3-phospho-N,N-dimethylethanolamine + S-adenosyl-L-methionine = 1,2-di-(9Z-octadecenoyl)-sn-glycero-3-phosphocholine + S-adenosyl-L-homocysteine + H(+). The enzyme catalyses 1,2-di-(9Z,12Z-octadecadienoyl)-sn-glycero-3-phosphoethanolamine + S-adenosyl-L-methionine = 1,2-di-(9Z,12Z-octadecadienoyl)-sn-glycero-3-phospho-N-methylethanolamine + S-adenosyl-L-homocysteine + H(+). It carries out the reaction 1,2-di-(9Z,12Z-octadecadienoyl)-sn-glycero-3-phospho-N-methylethanolamine + S-adenosyl-L-methionine = 1,2-di-(9Z,12Z-octadecadienoyl)-sn-glycero-3-phospho-N,N-dimethylethanolamine + S-adenosyl-L-homocysteine + H(+). The catalysed reaction is 1,2-di-(9Z,12Z-octadecadienoyl)-sn-glycero-3-phospho-N,N-dimethylethanolamine + S-adenosyl-L-methionine = 1,2-di-(9Z,12Z-octadecadienoyl)-sn-glycero-3-phosphocholine + S-adenosyl-L-homocysteine + H(+). It catalyses the reaction 1,2-di-(9Z,12Z,15Z-octadecatrienoyl)-sn-glycero-3-phosphoethanolamine + S-adenosyl-L-methionine = 1,2-di-(9Z,12Z,15Z-octadecatrienoyl)-sn-glycero-3-phospho-N-methylethanolamine + S-adenosyl-L-homocysteine + H(+). The enzyme catalyses 1,2-di-(9Z,12Z,15Z-octadecatrienoyl)-sn-glycero-3-phospho-N-methylethanolamine + S-adenosyl-L-methionine = 1,2-di-(9Z,12Z,15Z-octadecatrienoyl)-sn-glycero-3-phospho-N,N-dimethylethanolamine + S-adenosyl-L-homocysteine + H(+). It carries out the reaction 1,2-di-(9Z,12Z,15Z-octadecatrienoyl)-sn-glycero-3-phospho-N,N-dimethylethanolamine + S-adenosyl-L-methionine = 1,2-di-(9Z,12Z,15Z-octadecatrienoyl)-sn-glycero-3-phosphocholine + S-adenosyl-L-homocysteine + H(+). The catalysed reaction is 1-hexadecanoyl-2-(4Z,7Z,10Z,13Z,16Z,19Z-docosahexaenoyl)-sn-glycero-3-phosphoethanolamine + S-adenosyl-L-methionine = 1-hexadecanoyl-2-(4Z,7Z,10Z,13Z,16Z,19Z-docosahexaenoyl)-sn-glycero-3-phospho-N-methylethanolamine + S-adenosyl-L-homocysteine + H(+). It catalyses the reaction 1-hexadecanoyl-2-(4Z,7Z,10Z,13Z,16Z,19Z-docosahexaenoyl)-sn-glycero-3-phospho-N-methylethanolamine + S-adenosyl-L-methionine = 1-hexadecanoyl-2-(4Z,7Z,10Z,13Z,16Z,19Z-docosahexaenoyl)-sn-glycero-3-phospho-N,N-dimethylethanolamine + S-adenosyl-L-homocysteine + H(+). The enzyme catalyses 1-hexadecanoyl-2-(4Z,7Z,10Z,13Z,16Z,19Z-docosahexaenoyl)-sn-glycero-3-phospho-N,N-dimethylethanolamine + S-adenosyl-L-methionine = 1-hexadecanoyl-2-(4Z,7Z,10Z,13Z,16Z,19Z-docosahexaenoyl)-sn-glycero-3-phosphocholine + S-adenosyl-L-homocysteine + H(+). Its pathway is phospholipid metabolism; phosphatidylcholine biosynthesis. Catalyzes the three sequential steps of the methylation pathway for the biosynthesis of phosphatidylcholine, a critical and essential component for membrane structure. Uses S-adenosylmethionine (S-adenosyl-L-methionine, SAM or AdoMet) as the methyl group donor for the methylation of phosphatidylethanolamine (1,2-diacyl-sn-glycero-3-phosphoethanolamine, PE) to phosphatidylmonomethylethanolamine (1,2-diacyl-sn-glycero-3-phospho-N-methylethanolamine, PMME), PMME to phosphatidyldimethylethanolamine (1,2-diacyl-sn-glycero-3-phospho-N,N-dimethylethanolamine, PDME), and PDME to phosphatidylcholine (1,2-diacyl-sn-glycero-3-phosphocholine, PC), producing S-adenosyl-L-homocysteine in each step. The chain is Phosphatidylethanolamine N-methyltransferase from Rattus norvegicus (Rat).